We begin with the raw amino-acid sequence, 229 residues long: Potassium/proton antiporter CemA (229 aa).

3 consecutive transmembrane segments (helical) span residues 6 to 26, 107 to 127, and 189 to 209; these read AFIP…ISLC, ILHF…SFWA, and ILSG…KYWI.

The protein belongs to the CemA family.

It localises to the plastid. Its subcellular location is the chloroplast inner membrane. It carries out the reaction K(+)(in) + H(+)(out) = K(+)(out) + H(+)(in). Functionally, contributes to K(+)/H(+) antiport activity by supporting proton efflux to control proton extrusion and homeostasis in chloroplasts in a light-dependent manner to modulate photosynthesis. Prevents excessive induction of non-photochemical quenching (NPQ) under continuous-light conditions. Indirectly promotes efficient inorganic carbon uptake into chloroplasts. This is Potassium/proton antiporter CemA from Crucihimalaya wallichii (Rock-cress).